Consider the following 183-residue polypeptide: Adenine phosphoribosyltransferase (183 aa).

This sequence belongs to the purine/pyrimidine phosphoribosyltransferase family. In terms of assembly, homodimer.

The protein localises to the cytoplasm. The catalysed reaction is AMP + diphosphate = 5-phospho-alpha-D-ribose 1-diphosphate + adenine. It participates in purine metabolism; AMP biosynthesis via salvage pathway; AMP from adenine: step 1/1. Its function is as follows. Catalyzes a salvage reaction resulting in the formation of AMP, that is energically less costly than de novo synthesis. The chain is Adenine phosphoribosyltransferase from Escherichia fergusonii (strain ATCC 35469 / DSM 13698 / CCUG 18766 / IAM 14443 / JCM 21226 / LMG 7866 / NBRC 102419 / NCTC 12128 / CDC 0568-73).